Consider the following 2049-residue polypeptide: MKPKKLQQGSDSAHTSDTESTKTCEKTAKKLPKTQKKLQKSKKTAKKRRDEEFRIFFPPPRVNPPIKTPFRLHNTNCEHRDWISDNLCLPKYASYQTGWRISHKSMKSLVLMDKRRAEWLKMHNLYRKSEIRKAIWTIERKGAKKLDEMPGNWRISREKRNSLDLQEFPIKIEQFPVKKREKTAKNWRKIAVLVCFKRKTTTKNRYLRRPKTKNQRKIEFRRPKTSKNRKLRLKIRPRVRFIDRKLIRRRECLVDPQNLISWIRRQEKAENLRIFQEKQKRLQEQQEDAEWEQIEAQRANSDDVIEDKSLKMEVLDIVKHKNRNWIVVEKKGCEIQGMEYLLVLESEFNEQQTVRYDRQNVDHKFRKMRDEKKEIVEFVSSLPFYKPKPPKINYPTNAGEYEEQEIELERRRLEEEERDQNDKKLEIEDRNHFKKWQKRRNLIKIYRNSIRREIWRRRRGRNSTENSDSESSSEASEPPDDVITKEEPTDFSEENLVKKEEICDDFEHKIEEDVKPDVYKLNINKMISPPSPPPKKGILLKKDTKKRGEKRVKTVQFKLTKRQKLAKLWKPPTWQIRQILRAAADAKGYKIRSGRSRYNEKIRRLNHFNGQKLGFKSAPTRIDTFEKGIDVREQPIPFVEEFVLDDHALLTFASFDDLKAYEEAYSLRQQDVIDEFWRHQCLKNIESFEKDDVERAEMRHEIEKLETEMRCQKMNENAEIDQENIESFETAGRQIENIIKNTGDCAFETLEEYFSISADFEKNEELRAEEEQLEIEMEHWERELEEMIDVIKREFSIENLMMRMLKNRHLLTMRLVVSGTNQSSIDRENLLRKTKKLLEELKNLRIAAQNRLKIDFDRNERMLYRLRNAKQKAAKRARKLVKNWKKSAQNKSGVLKINGNHVINHDVVVKKWKVELKIEGNGESPRKVVRKAKETSGYWDFRWNFTKFAWKSDVLKRKQRFGKHSARRAIAFGVKIEEIHSETEFEKLLSEYVEYEESDIQNQVSIDRKIDIITKIKTITLNDVRAKAIEMQKQIVEKAVDLMIKSRLDEAAREHQEWLQSDECKRENQLRQRQQNFFDLTSSSPATSSFVTTQVVVPRLTHLEERLIELGVEHEVVQHTQRLQSEFENYHHLQQQHNHQNFQQQQQGNHDFVTPKAPQDKQKRKYTKRKALLNTAVASSSDQNGMKSPGSSAMENAAAAAQAAQAQAQATIPTPTVNLPDVVAIAAAAATAQPSAAAAKRPASETPPNGLPKVPRHDEQQQQQNNAHSIVMGAREGFLAMNPSLAGHVFPASSASTSGAPGAHSATTSGGAGLIGISAATQAQLQAQQAAQAAAAAAAAAAAQATQSLYINTSVAPGAQAASAQGGGGGQVVAAQQSNQAATAEAIRLLQGLPPFLTAGSGSAGIPYFSALSQQLNQLGAAAPGAPGTLNGLQFPANAALGPQLAGAALLAAVPGAQQQIKRPGRWSGMHVKIATDIQNYKQSQEKKLPTDIQSTSSSSAAPASAPAPRAGAGAGATSSSAASSSTSTPSSSSHHKKSSPPHHQKSAAPSAPPRDVTSAHAPPPPASSAPIVGAPRQGATPQAAPATTPATTSQHQQSIQFSQFPPPQLSGGAAYAGNPQLMAAAINEATRRVAATPKPPVVRPPSAATQQQPVSVTSQASQQQQQFQQIQQQRAAAIAAAAAATSQQAPPAQASQATSAAQQIATSMGLQPAQVTDLVNQHAQQYLLLQQQQQQQQREQQQQQQLQAQQVQQQLIAHLLGGGHQAQQAAPAVSVAQQQQQQVAAAAAAQQQHNAQLQNIMILTALQQQMERGAAAGAAASLPYQLQLAQAQAQAQAQQAPPTSQPSQAATPQQQQQLDLIRQMEAVAQVQQAHAQAQAQAQAQAQQMQQQQIQQMLMAGQGGPNGQDLIRLLQAAQQQSQAQQQQQQQQAVVAAAQQQQQQQQHNQQLAAAQAAAAAAAAGRPTQNQYEALLQQQRLLAAQQQAAAGASAQQQAAAAAAQAQAQQFQQQLLGLQPNLLLAQVQQAQQAQAQAQAQAQQKPPQMPNGR.

The interval 1 to 58 is disordered; that stretch reads MKPKKLQQGSDSAHTSDTESTKTCEKTAKKLPKTQKKLQKSKKTAKKRRDEEFRIFFP. Residues 1 to 1601 form a sufficient to prevent linker cell death region; it reads MKPKKLQQGS…TTSQHQQSIQ (1601 aa). The span at 14 to 28 shows a compositional bias: basic and acidic residues; it reads HTSDTESTKTCEKTA. Residues 29–47 are compositionally biased toward basic residues; it reads KKLPKTQKKLQKSKKTAKK. Coiled-coil stretches lie at residues 264 to 302 and 396 to 432; these read RRQE…ANSD and TNAG…DRNH. A disordered region spans residues 459–492; it reads RGRNSTENSDSESSSEASEPPDDVITKEEPTDFS. A compositionally biased stretch (low complexity) spans 463–476; that stretch reads STENSDSESSSEAS. Coiled-coil stretches lie at residues 686–730, 756–796, and 822–880; these read ESFE…SFET, ISAD…REFS, and QSSI…ARKL. The span at 1134–1150 shows a compositional bias: low complexity; sequence QQQHNHQNFQQQQQGNH. Disordered regions lie at residues 1134-1198, 1236-1265, 1481-1616, and 1636-1661; these read QQQH…ENAA, AAAA…QQQN, YKQS…GAAY, and ATPK…TSQA. The segment covering 1162–1171 has biased composition (basic residues); that stretch reads QKRKYTKRKA. Residues 1176–1194 are compositionally biased toward polar residues; sequence AVASSSDQNGMKSPGSSAM. Over residues 1495-1533 the composition is skewed to low complexity; that stretch reads STSSSSAAPASAPAPRAGAGAGATSSSAASSSTSTPSSS. Over residues 1534-1546 the composition is skewed to basic residues; it reads SHHKKSSPPHHQK. 2 stretches are compositionally biased toward low complexity: residues 1569–1604 and 1649–1661; these read SAPI…QFSQ and ATQQ…TSQA. Coiled-coil stretches lie at residues 1659 to 1685 and 1725 to 1801; these read SQAS…AAAA and QQYL…LQNI. The disordered stretch occupies residues 1836 to 1858; sequence AQAQQAPPTSQPSQAATPQQQQQ. 2 coiled-coil regions span residues 1863–1961 and 1991–2041; these read RQME…AAAA and SAQQ…AQQK.

Expressed in the linker cell just before it dies.

It is found in the cytoplasm. Functionally, in males, required for non-apoptotic death of the linker cell once it has finished guiding gonad elongation at the end of larval development. May be involved in nuclear envelope crenellation in the linker cell. Its function is as follows. In males, promotes linker cell survival. The chain is Polyglutamine-repeat protein pqn-41 from Caenorhabditis elegans.